The sequence spans 263 residues: Tryptophan synthase alpha chain (263 aa).

Active-site proton acceptor residues include Glu-49 and Asp-60.

Belongs to the TrpA family. Tetramer of two alpha and two beta chains.

It catalyses the reaction (1S,2R)-1-C-(indol-3-yl)glycerol 3-phosphate + L-serine = D-glyceraldehyde 3-phosphate + L-tryptophan + H2O. Its pathway is amino-acid biosynthesis; L-tryptophan biosynthesis; L-tryptophan from chorismate: step 5/5. In terms of biological role, the alpha subunit is responsible for the aldol cleavage of indoleglycerol phosphate to indole and glyceraldehyde 3-phosphate. This chain is Tryptophan synthase alpha chain, found in Roseobacter denitrificans (strain ATCC 33942 / OCh 114) (Erythrobacter sp. (strain OCh 114)).